The sequence spans 127 residues: Histidine-containing phosphotransfer protein 4 (127 aa).

Residues 27 to 122 (NPNFVEEVSA…STLRKKLEHY (96 aa)) enclose the HPt domain. At H68 the chain carries Phosphohistidine.

In terms of assembly, interacts with the B-type response regulators ARR1 and ARR2. Post-translationally, two-component system major event consists of a His-to-Asp phosphorelay between a sensor histidine kinase (HK) and a response regulator (RR). In plants, the His-to-Asp phosphorelay involves an additional intermediate named Histidine-containing phosphotransfer protein (HPt). This multistep phosphorelay consists of a His-Asp-His-Asp sequential transfer of a phosphate group between first a His and an Asp of the HK protein, followed by the transfer to a conserved His of the HPt protein and finally the transfer to an Asp in the receiver domain of the RR protein. In terms of tissue distribution, predominantly expressed in aerial parts of the plant.

The protein resides in the cytoplasm. Its subcellular location is the cytosol. It is found in the nucleus. Functions as a two-component phosphorelay mediator between cytokinin sensor histidine kinases and response regulators (B-type ARRs). Plays an important role in propagating cytokinin signal transduction through the multistep His-to-Asp phosphorelay. The chain is Histidine-containing phosphotransfer protein 4 (AHP4) from Arabidopsis thaliana (Mouse-ear cress).